Here is a 459-residue protein sequence, read N- to C-terminus: WPP domain-interacting protein 3 (459 aa).

A compositionally biased stretch (polar residues) spans 1-17 (MNESVPDSVEDNGNSVP). The disordered stretch occupies residues 1-78 (MNESVPDSVE…GPVRDEAAPV (78 aa)). The span at 52 to 66 (STRKGFGLKKWRRIK) shows a compositional bias: basic residues. 2 consecutive short sequence motifs (nuclear localization signal) follow at residues 60–61 (KK) and 63–64 (RR). The segment covering 67-78 (RDGPVRDEAAPV) has biased composition (basic and acidic residues). The Nuclear localization signal 3 motif lies at 86 to 87 (KR). Disordered stretches follow at residues 240–266 (KEEV…NNNH) and 308–330 (TDEL…TSSG). The segment covering 251-266 (NGNKEDDGESKKNNNH) has biased composition (basic and acidic residues). A compositionally biased stretch (polar residues) spans 308 to 319 (TDELSSDQPSHQ). The stretch at 331–375 (SKALILKEKVKLLEHKLEEARAALEAKEARIQELENSKIESELEC) forms a coiled coil. Residues 426–459 (KLGFYILTQLILLVSILRFLVLQFSPASRLVIPT) enclose the KASH domain. Residues 427–447 (LGFYILTQLILLVSILRFLVL) traverse the membrane as a helical segment.

Component of Ran complexes at least composed of WIT1 or WIT2, RANGAP1 or RANGAP2, and WIP1 or WIP2 or WIP3. Interacts with RANGAP1, WPP1/MAF1, and WPP2/MAF2. Interacts with SUN1 and SUN2. Core component of the LINC complex which is composed of inner nuclear membrane SUN domain-containing proteins coupled to outer nuclear membrane WIP and WIT proteins. The LINC complex also involves nucleoskeletal proteins CRWN/LINC and possibly KAKU4 and the cytoskeletal myosin KAKU1. Interacts with WIT2. Expressed in seedlings, roots, stems, leaves, and flowers.

Its subcellular location is the nucleus envelope. The protein localises to the nucleus membrane. Its function is as follows. Mediates and enhances the nuclear envelope docking of RANGAP proteins mediated by WIT1 and WIT2 in the undifferentiated cells of root tips. As component of the SUN-WIP-WIT2-KAKU1 complex, mediates the transfer of cytoplasmic forces to the nuclear envelope (NE), leading to nuclear shape changes. This Arabidopsis thaliana (Mouse-ear cress) protein is WPP domain-interacting protein 3 (WIP3).